Reading from the N-terminus, the 1225-residue chain is MLPNTELHTTEFSKTRKFTRQSFKQIEQLTASLANDRVARHKFLFNNSLPLISDYSGEDSNGHQLQATIKIPDEITNPKEYDPSDYPLAEDESFFKQGHKYDYLVTFRAGSLTNTYEPKTKMYKLHAALDRLMHVKQRKSRFADLWRELCAVIASLDVWYQTTNYPLRTYVKFLFHKGDEFPFYESPSQDKIVFNDKSVASILPTFVYTCCQVGTAIMSGILTHVESIAAMNHFLHCAKDSYIDEKLKVKGIGRSWYQEALHNVGQVTVPVWSQFNEIIGHRTKNTSEPHFVSATFTALRAKRAELLYSEFNDYINRALRLSKTQNDVANYYAACRAMTNDGTFLATLTELSLDAAVFPRIEQRLVTRPAVLMSNARHESLRQKYTDGVGSIAQSYLSSFTDEVARRVNGIHHDEAWLNFLTTSSPGRKLTEIEKLEVGGDVAAWSNSRIVMQAVFAREYRTPERIFKSLKAPIKLVERQQSDRRQRAISGLDNDRLFLSFMPYTIGKQIYDLNDNAAQGKQAGNAFDIGEMLYWTSQRNVLLSSIDVAGMDASVTTNTKDIYNTFVLDVASKCTVPRFGPYYAKNMEVFEVGKRQSQVKYVNAAWQACALEAANSQTSTSYESEIFGQVKNAEGTYPSGRADTSTHHTVLLQGLVRGNELKRASDGKNSCLATIKILGDDIMEIFQGSQDDTHHHAVSNANVLNESGFATTAELSQNSIVLLQQLVVNGTFWGFADRISLWTREDTKDIGRLNLAMMELNALLDDLLFRVRRPEGLKMLGFFCGAICLRRFTLSVDNNLYDSTYNSLSKYMTLIKYDKNPDFDSTLMSLILPLTWLFMPRGGEYPAYPFERRDGTFTEDESMFTARGAYKRRLLYDISNIREMIQQNSLALDDELLHEYGFTGASLLIDLNILDLIDEVKKEDISPVKVSELATSLEQLGKLGEREKSRRAASDLKVRGHALSNDIVYGYGLQEKIQKSAMATKETTVQSKRISLRLHEVIATKTRDYRIPTTPADALHLYEFEGEEVVMDLLPHAKHTSYSNLAYNMSFGSDGWFAFALLGGLDRSAILLRLDVASIRGNYHKFSYDDPVFKQGYKIYKSDATSLDDFFIAISAGPKEQGILLRAFAYYSLYGNVEYHYVLSPRQLFFLSDNPVSAERLVRIPPSYYVSTQCRALYNIFSYLHILRSITSHEGKRLKMVLHAGLIAYVRGTSSSAILPEADTV.

Residues Leu-497 to Val-727 form the RdRp catalytic domain.

The protein belongs to the reoviridae RNA-directed RNA polymerase family. As to quaternary structure, interacts with VP6.

The catalysed reaction is RNA(n) + a ribonucleoside 5'-triphosphate = RNA(n+1) + diphosphate. In terms of biological role, RNA-directed RNA polymerase that is involved in transcription and genome replication. Following infection, it catalyzes the synthesis of fully conservative plus strands. After core assembly, which consists in recruitment of one capped plus-strand for each genomic segments and polymerase complexes, the polymerase switches mode and catalyzes the synthesis of complementary minus-strands. The protein is RNA-directed RNA polymerase VP2 (S2) of Lymantria dispar (Gypsy moth).